Here is an 892-residue protein sequence, read N- to C-terminus: Translation initiation factor IF-2 (892 aa).

Positions Thr66 to Ala305 are disordered. Positions Ser68–Val82 are enriched in polar residues. Composition is skewed to basic and acidic residues over residues Val93–Val159 and Asp166–Lys216. Residues Gly254–Lys269 are compositionally biased toward basic residues. Positions His270–Ala282 are enriched in basic and acidic residues. The 170-residue stretch at Pro391–Lys560 folds into the tr-type G domain. The interval Gly400–Thr407 is G1. Residue Gly400–Thr407 participates in GTP binding. The tract at residues Gly425–His429 is G2. A G3 region spans residues Asp446–Gly449. GTP contacts are provided by residues Asp446–His450 and Asn500–Asp503. The tract at residues Asn500–Asp503 is G4. The G5 stretch occupies residues Ser536 to Lys538.

It belongs to the TRAFAC class translation factor GTPase superfamily. Classic translation factor GTPase family. IF-2 subfamily.

The protein localises to the cytoplasm. One of the essential components for the initiation of protein synthesis. Protects formylmethionyl-tRNA from spontaneous hydrolysis and promotes its binding to the 30S ribosomal subunits. Also involved in the hydrolysis of GTP during the formation of the 70S ribosomal complex. The polypeptide is Translation initiation factor IF-2 (Salmonella typhi).